The following is a 324-amino-acid chain: Transcription factor TCP24 (324 aa).

The region spanning 50–108 is the TCP domain; it reads GKDRHSKVLTSKGLRDRRIRLSVATAIQFYDLQDRLGFDQPSKAVEWLINAASDSITDL. Disordered stretches follow at residues 122–215 and 261–297; these read QNQT…PMNH and QRSS…NHQL. The segment covering 127–142 has biased composition (low complexity); that stretch reads SACSSGTSESSLLSLS. A R domain is found at 144-162; sequence TEIRGKARERARERTAKDR. A compositionally biased stretch (basic and acidic residues) spans 144–167; sequence TEIRGKARERARERTAKDRDKDLQ. 2 stretches are compositionally biased toward polar residues: residues 168–192 and 200–212; these read NAHS…NWTG and VQLQ…SQEP. Over residues 261 to 281 the composition is skewed to low complexity; the sequence is QRSSISSSSSSSSPMDSQSIS.

Forms a heterodimeric complex with ABAP1. Interacts with SPL. In terms of tissue distribution, expressed in cotyledons, particularly in the vascular region, in leaves, roots, stems, buds, flowers and siliques.

It is found in the nucleus. In terms of biological role, plays a pivotal role in the control of morphogenesis of shoot organs by negatively regulating the expression of boundary-specific genes such as CUC genes, probably through the induction of miRNA (e.g. miR164). In association with ABAP1, exerts a negative role in cell proliferation in leaves, possibly by inhibiting mitotic DNA replication. Participates in ovule development. The protein is Transcription factor TCP24 (TCP24) of Arabidopsis thaliana (Mouse-ear cress).